The primary structure comprises 519 residues: Protein amnionless (519 aa).

The signal sequence occupies residues 1-19 (MGAPGRVLLWLQLCALTRA). Over 20 to 430 (AYKLWVPNTY…NAPGARSDLM (411 aa)) the chain is Extracellular. Asn-35 and Asn-39 each carry an N-linked (GlcNAc...) asparagine glycan. 6 disulfide bridges follow: Cys-43–Cys-152, Cys-193–Cys-267, Cys-259–Cys-265, Cys-277–Cys-303, Cys-288–Cys-304, and Cys-293–Cys-307. The tract at residues 67-143 (SDMEELQDRK…VLASGAGFSA (77 aa)) is interaction with CUBN. Positions 256–308 (PEACADPSGCVCGNAEVQPWICAALLQPLGGRCPQAACQDALRPEGQCCDLCG) constitute a VWFC domain. The helical transmembrane segment at 431 to 451 (GGLVAALLLLLLVLLVAALLL) threads the bilayer. Residues 452–519 (RRAGRLRWSR…YGEAEAEAEA (68 aa)) lie on the Cytoplasmic side of the membrane.

As to quaternary structure, interacts (via extracellular region) with CUBN/cubilin, giving rise to a huge complex containing one AMN chain and three CUBN chains. N-glycosylated. Post-translationally, a soluble form arises by proteolytic removal of the membrane anchor. Detected in kidney cortex (at protein level).

It localises to the apical cell membrane. Its subcellular location is the cell membrane. It is found in the endosome membrane. The protein resides in the membrane. The protein localises to the coated pit. Its function is as follows. Membrane-bound component of the endocytic receptor formed by AMN and CUBN. Required for normal CUBN glycosylation and trafficking to the cell surface. The complex formed by AMN and CUBN is required for efficient absorption of vitamin B12. Required for normal CUBN-mediated protein transport in the kidney. This is Protein amnionless (AMN) from Sus scrofa (Pig).